We begin with the raw amino-acid sequence, 610 residues long: UvrABC system protein C (610 aa).

A GIY-YIG domain is found at 16 to 94 (SQPGVYRMYD…IKLYQPRYNV (79 aa)). The UVR domain maps to 204 to 239 (DQVLTQLISRMETASQNLEFEEAARIRDQIQAVRRV).

The protein belongs to the UvrC family. Interacts with UvrB in an incision complex.

Its subcellular location is the cytoplasm. In terms of biological role, the UvrABC repair system catalyzes the recognition and processing of DNA lesions. UvrC both incises the 5' and 3' sides of the lesion. The N-terminal half is responsible for the 3' incision and the C-terminal half is responsible for the 5' incision. In Escherichia coli (strain SMS-3-5 / SECEC), this protein is UvrABC system protein C.